The sequence spans 349 residues: MEYNNNNQQSFWQFSDQLRVQTPNLANLSLNDSIWSTNSVFKERRNLDIAATTDKNNNQIDYYQKKTTSDNINSNWNWKSSGSNNDMGLGFGPVGSKSTVDLNPIDKFNSPFNDTWKFNSVNVNVNGYSPSSAVNGDFNKGVYTSMKKYGYNVNLKNNNKNKGIDEDHQIQKGGKKNRKNQQNNNNQRNEDDKNNGLDKRFKTLPPAEALPRNETIGGYIFVCNNDTMEENLKRQLFGLPPRYRDSVRAITPGLPLFLYNYSTHQLHGIYEAASFGGTNIELNAFEDKKCPGESRFPAQVRAITRKVCLPLEEDSFRPILHHYDGPKFRLELSVPEVLSLLDIFADQNP.

The disordered stretch occupies residues Asn-157–Phe-201. Residues Arg-188–Phe-201 show a composition bias toward basic and acidic residues. One can recognise a DCD domain in the interval Glu-214–Asp-346.

Interacts with CRY2 in the cytoplasm. Interacts with Verticillium dahliae PevD1. Interacts with FYPP3. In terms of tissue distribution, highly expressed in sensecent leaves, cauline leaves and sepals. Expressed in the shoot apical meristem, leaf veins, central cylinder, root hair zone, root tips, rosette leaves, flowers and siliques.

Its subcellular location is the cytoplasm. Its function is as follows. Contributes to the initial phase of responses to abiotic and biotic stress signals. Binds FYPP3 and facilitates FYPP3 degradation to promote abscisic acid (ABA) response. The chain is DCD domain-containing protein NRP from Arabidopsis thaliana (Mouse-ear cress).